The sequence spans 439 residues: GlutamylGlutaminyl-tRNA synthetase (439 aa).

A 'HIGH' region motif is present at residues 6 to 16 (PSPTGDMHIGN). Positions 232-236 (KMSKR) match the 'KMSKS' region motif. Residue lysine 235 participates in ATP binding.

It belongs to the class-I aminoacyl-tRNA synthetase family. Glutamate--tRNA ligase type 1 subfamily. Monomer.

Its subcellular location is the cytoplasm. It carries out the reaction tRNA(Glu) + L-glutamate + ATP = L-glutamyl-tRNA(Gln) + AMP + diphosphate. Aminoacylates tRNA(Gln) with glutamate. Does not aminoacylate tRNA(Glu). This is GlutamylGlutaminyl-tRNA synthetase (gltX2) from Helicobacter pylori (strain ATCC 700392 / 26695) (Campylobacter pylori).